A 270-amino-acid chain; its full sequence is 4-hydroxy-tetrahydrodipicolinate reductase (270 aa).

NAD(+) contacts are provided by residues 11–16 (GAGGRM) and glutamate 37. Residue arginine 38 coordinates NADP(+). NAD(+)-binding positions include 101-103 (GTT) and 125-128 (APNM). Histidine 158 (proton donor/acceptor) is an active-site residue. Residue histidine 159 coordinates (S)-2,3,4,5-tetrahydrodipicolinate. Lysine 162 (proton donor) is an active-site residue. 168-169 (GT) is a binding site for (S)-2,3,4,5-tetrahydrodipicolinate.

This sequence belongs to the DapB family.

The protein localises to the cytoplasm. The catalysed reaction is (S)-2,3,4,5-tetrahydrodipicolinate + NAD(+) + H2O = (2S,4S)-4-hydroxy-2,3,4,5-tetrahydrodipicolinate + NADH + H(+). It carries out the reaction (S)-2,3,4,5-tetrahydrodipicolinate + NADP(+) + H2O = (2S,4S)-4-hydroxy-2,3,4,5-tetrahydrodipicolinate + NADPH + H(+). It participates in amino-acid biosynthesis; L-lysine biosynthesis via DAP pathway; (S)-tetrahydrodipicolinate from L-aspartate: step 4/4. In terms of biological role, catalyzes the conversion of 4-hydroxy-tetrahydrodipicolinate (HTPA) to tetrahydrodipicolinate. The chain is 4-hydroxy-tetrahydrodipicolinate reductase from Shewanella baltica (strain OS223).